The chain runs to 153 residues: Aspartate carbamoyltransferase regulatory chain (153 aa).

Cys109, Cys114, Cys138, and Cys141 together coordinate Zn(2+).

The protein belongs to the PyrI family. As to quaternary structure, contains catalytic and regulatory chains. The cofactor is Zn(2+).

Functionally, involved in allosteric regulation of aspartate carbamoyltransferase. In Salmonella schwarzengrund (strain CVM19633), this protein is Aspartate carbamoyltransferase regulatory chain.